Here is a 119-residue protein sequence, read N- to C-terminus: Holo-[acyl-carrier-protein] synthase (119 aa).

Positions 8 and 58 each coordinate Mg(2+).

It belongs to the P-Pant transferase superfamily. AcpS family. Mg(2+) is required as a cofactor.

The protein resides in the cytoplasm. The enzyme catalyses apo-[ACP] + CoA = holo-[ACP] + adenosine 3',5'-bisphosphate + H(+). Transfers the 4'-phosphopantetheine moiety from coenzyme A to a Ser of acyl-carrier-protein. The protein is Holo-[acyl-carrier-protein] synthase of Bacillus cereus (strain ZK / E33L).